The sequence spans 185 residues: Peptide deformylase (185 aa).

Fe cation is bound by residues Cys-109 and His-152. Residue Glu-153 is part of the active site. His-156 contributes to the Fe cation binding site.

This sequence belongs to the polypeptide deformylase family. Fe(2+) is required as a cofactor.

It catalyses the reaction N-terminal N-formyl-L-methionyl-[peptide] + H2O = N-terminal L-methionyl-[peptide] + formate. Removes the formyl group from the N-terminal Met of newly synthesized proteins. Requires at least a dipeptide for an efficient rate of reaction. N-terminal L-methionine is a prerequisite for activity but the enzyme has broad specificity at other positions. The chain is Peptide deformylase from Roseiflexus sp. (strain RS-1).